A 279-amino-acid polypeptide reads, in one-letter code: Serine protease 29 (279 aa).

Residues M1–A17 form the signal peptide. Residues I31–Q276 enclose the Peptidase S1 domain. A disulfide bridge connects residues C62 and C78. Active-site charge relay system residues include H77 and D124. Intrachain disulfides connect C158–C234, C191–C215, and C224–C252. N-linked (GlcNAc...) asparagine glycosylation is present at N197. The active-site Charge relay system is S228. The N-linked (GlcNAc...) asparagine glycan is linked to N235.

The protein belongs to the peptidase S1 family. Homooligomer, heterodimer and heterotetramer. Able to form homo- and hetero- tetrameric structures. Heterotetramer is far more stable than the homotetramer. Expressed in embryos and placenta. Found in uterus especially in glandular epithelium during zona lysis and implantation.

The protein localises to the secreted. In terms of biological role, involved in embryo hatching and implantation. This is Serine protease 29 (Prss29) from Mus musculus (Mouse).